A 217-amino-acid chain; its full sequence is Peptide methionine sulfoxide reductase MsrA (217 aa).

Cys-56 is an active-site residue.

The protein belongs to the MsrA Met sulfoxide reductase family.

The catalysed reaction is L-methionyl-[protein] + [thioredoxin]-disulfide + H2O = L-methionyl-(S)-S-oxide-[protein] + [thioredoxin]-dithiol. The enzyme catalyses [thioredoxin]-disulfide + L-methionine + H2O = L-methionine (S)-S-oxide + [thioredoxin]-dithiol. Has an important function as a repair enzyme for proteins that have been inactivated by oxidation. Catalyzes the reversible oxidation-reduction of methionine sulfoxide in proteins to methionine. The chain is Peptide methionine sulfoxide reductase MsrA from Corynebacterium glutamicum (strain ATCC 13032 / DSM 20300 / JCM 1318 / BCRC 11384 / CCUG 27702 / LMG 3730 / NBRC 12168 / NCIMB 10025 / NRRL B-2784 / 534).